Here is a 394-residue protein sequence, read N- to C-terminus: MHFAIPLEYQSELEATEPVDVGTDEEIISSIEQYRPVTSEKNIWAFWDSGILSMPSWCKRNVIGWARICGADWTIRVLDMKPNSPNHVLKFIDRDMLPEAFLSGTMDGHHTGQHSADFIRGPLLHHYGGVSMDVGCLLIRHIDRICWDLLADPDSPYEIAVPVLYDQTIANHFIAARKNNIFIEKWHQLFLHLWNGRTHQQGISDSPLLGFIKDIRYDDATDFHWDWSVPVPQFLEYIAQVLCWQRLCLIRDTGDGFKSSEYWQRNVLCIDSLNEVWGGEKTLGFDGIGPRMYNLLTTRLDADPDSTAYKDAYKLVWRLLTRSSFQKVTRAKNLTYTPHLGTLWDQNEGKDCIPGSFGELLRYGPVHFRQKRENIEQLEASEPRTLIEKGLLEV.

This sequence belongs to the afumC glycosyltransferase family.

It functions in the pathway secondary metabolite biosynthesis. Functionally, probable glycosyl transferase; part of the gene cluster that mediates the biosynthesis of cytokinins such as fusatin, fusatinic acids or 8-oxofusatin, known for their growth promoting and anti-senescence activities toward host plants. FCK1 is a bifunctional enzyme that performs the first steps in the biosynthesis of Fusarium cytokinins. It first condenses adenosine monophosphate (AMP) with dimethylallyl diphosphate (DMAPP) to yield isoprenyl adenosine monophosphate. It then catalyzes the removal of the phosphoribose to produce isopentenylaldehyde. The cytochrome P450 monooxygenase then converts isopentenylaldehyde to trans-zeatin. A condensation step converts trans-zeatin to fusatin which is further modified to produce fusatinic acid. The mechanism for oxidation of fusatin to fusatinic acid remains unknown. 8-oxofusatin could be produced through several pathways, via direct oxygenation of fusatin, or via the 8-oxo-pentenyladenine intermediate which itself must arise from either the prenylation of 8-oxo-AMP by FCK1 and/or oxygenation of isopentenylaldehyde. Both the FCK3 and FCK4 enzymes act downstream of the identified cytokinins to produce yet unidentified compounds. The chain is Probable glycosyltransferase FCK3 from Fusarium pseudograminearum (strain CS3096) (Wheat and barley crown-rot fungus).